Here is a 166-residue protein sequence, read N- to C-terminus: Putative pre-16S rRNA nuclease (166 aa).

The disordered stretch occupies residues 1 to 24 (MPDTAAPTPDRPGPDDPGRGRRLG).

The protein belongs to the YqgF nuclease family.

The protein localises to the cytoplasm. Could be a nuclease involved in processing of the 5'-end of pre-16S rRNA. This Mycobacteroides abscessus (strain ATCC 19977 / DSM 44196 / CCUG 20993 / CIP 104536 / JCM 13569 / NCTC 13031 / TMC 1543 / L948) (Mycobacterium abscessus) protein is Putative pre-16S rRNA nuclease.